A 110-amino-acid polypeptide reads, in one-letter code: MSSQIIDRPKHELSRAELEELEEFEFKHGPMSLINDAMVTRTPVIISLRNNHKIIARVKAFDRHCNMVLENVKELWTEKKGKNVINRERFISKLFLRGDSVIVVLKTPVE.

Residues 31–110 form the Sm domain; the sequence is MSLINDAMVT…VIVVLKTPVE (80 aa).

Belongs to the snRNP core protein family. In terms of assembly, component of the Sm core complex, present in spliceosomal snRNP U1, U2, U4/U6 and U5. The core complex contains SMB1, SMD1, SMD2, SMD3, SME1, SMX3 and SMX2 (Sm proteins B, D1, D2, D3, E, F and G, respectively), and is probably a heptameric ring structure. Belongs to the CWC complex (or CEF1-associated complex), a spliceosome sub-complex reminiscent of a late-stage spliceosome composed of the U2, U5 and U6 snRNAs and at least BUD13, BUD31, BRR2, CDC40, CEF1, CLF1, CUS1, CWC2, CWC15, CWC21, CWC22, CWC23, CWC24, CWC25, CWC27, ECM2, HSH155, IST3, ISY1, LEA1, MSL1, NTC20, PRP8, PRP9, PRP11, PRP19, PRP21, PRP22, PRP45, PRP46, SLU7, SMB1, SMD1, SMD2, SMD3, SMX2, SMX3, SNT309, SNU114, SPP2, SYF1, SYF2, RSE1 and YJU2. Component of the U4/U6-U5 tri-snRNP complex composed of the U4, U6 and U5 snRNAs and at least PRP3, PRP4, PRP6, PRP8, PRP18, PRP31, PRP38, SNU13, SNU23, SNU66, SNU114, SPP381, SMB1, SMD1, SMD2, SMD3, SMX2, SMX3, LSM2, LSM3, LSM4, LSM5, LSM6, LSM7, LSM8, BRR2 and DIB1.

The protein localises to the nucleus. Its subcellular location is the cytoplasm. The protein resides in the cytosol. Plays a role in pre-mRNA splicing as a core component of the spliceosomal U1, U2, U4 and U5 small nuclear ribonucleoproteins (snRNPs), the building blocks of the spliceosome. The sequence is that of Small nuclear ribonucleoprotein Sm D2 (SMD2) from Saccharomyces cerevisiae (strain ATCC 204508 / S288c) (Baker's yeast).